The chain runs to 189 residues: Peptide deformylase (189 aa).

Positions 93 and 135 each coordinate Fe cation. The active site involves Glu-136. His-139 contributes to the Fe cation binding site.

The protein belongs to the polypeptide deformylase family. The cofactor is Fe(2+).

The catalysed reaction is N-terminal N-formyl-L-methionyl-[peptide] + H2O = N-terminal L-methionyl-[peptide] + formate. In terms of biological role, removes the formyl group from the N-terminal Met of newly synthesized proteins. Requires at least a dipeptide for an efficient rate of reaction. N-terminal L-methionine is a prerequisite for activity but the enzyme has broad specificity at other positions. This Karelsulcia muelleri (strain GWSS) (Sulcia muelleri) protein is Peptide deformylase.